A 986-amino-acid polypeptide reads, in one-letter code: Resact receptor (986 aa).

A signal peptide spans 1–21; it reads MATTRLLFLLVVAVMITMVRS. The Extracellular segment spans residues 22–507; sequence ATLHYNPTVI…GELCTNWGLY (486 aa). N-linked (GlcNAc...) asparagine glycosylation is found at Asn185, Asn361, and Asn410. A helical membrane pass occupies residues 508–528; it reads LGTLIPAFIIIFGGGLGYYIY. The Cytoplasmic segment spans residues 529–986; the sequence is RKRAYEAALD…SHSCSALHSS (458 aa). Residues 568 to 836 form the Protein kinase domain; that stretch reads LSAISVISNA…PNIIEVRTML (269 aa).

Its subcellular location is the membrane. It catalyses the reaction GTP = 3',5'-cyclic GMP + diphosphate. Functionally, implicated as a cell-surface receptor on spermatozoa for 'resact' a chemotactic peptide, and on various other cells as a receptor for atrial natriuretic peptide. The protein is Resact receptor of Arbacia punctulata (Punctuate sea urchin).